The sequence spans 337 residues: Aspartate carbamoyltransferase catalytic subunit (337 aa).

Carbamoyl phosphate is bound by residues Arg57 and Thr58. Lys86 provides a ligand contact to L-aspartate. Residues Arg107, His135, and Gln138 each contribute to the carbamoyl phosphate site. 2 residues coordinate L-aspartate: Arg172 and Arg234. Leu274 and Pro275 together coordinate carbamoyl phosphate.

This sequence belongs to the aspartate/ornithine carbamoyltransferase superfamily. ATCase family. As to quaternary structure, heterododecamer (2C3:3R2) of six catalytic PyrB chains organized as two trimers (C3), and six regulatory PyrI chains organized as three dimers (R2).

The enzyme catalyses carbamoyl phosphate + L-aspartate = N-carbamoyl-L-aspartate + phosphate + H(+). It participates in pyrimidine metabolism; UMP biosynthesis via de novo pathway; (S)-dihydroorotate from bicarbonate: step 2/3. Catalyzes the condensation of carbamoyl phosphate and aspartate to form carbamoyl aspartate and inorganic phosphate, the committed step in the de novo pyrimidine nucleotide biosynthesis pathway. The chain is Aspartate carbamoyltransferase catalytic subunit from Saccharophagus degradans (strain 2-40 / ATCC 43961 / DSM 17024).